Consider the following 303-residue polypeptide: Digeranylgeranylglyceryl phosphate synthase (303 aa).

A run of 7 helical transmembrane segments spans residues 23–43 (VLGVIAGAALLGEVNVAAAIA), 88–108 (LALALLALGPLLGLAVGPLTG), 130–150 (LPGNLAVSFSTASTLLYGSLA), 164–184 (TIPIILMVFLMTLAREVVKGV), 206–228 (FALRAALALACASLALAYLAAPL), 232–254 (GYAFLAFVTLGGLLSLASVAACL), and 272–292 (VAMFLGLIGILVDRLVQPVFY).

Belongs to the UbiA prenyltransferase family. DGGGP synthase subfamily. It depends on Mg(2+) as a cofactor.

It localises to the cell membrane. The enzyme catalyses sn-3-O-(geranylgeranyl)glycerol 1-phosphate + (2E,6E,10E)-geranylgeranyl diphosphate = 2,3-bis-O-(geranylgeranyl)-sn-glycerol 1-phosphate + diphosphate. It participates in membrane lipid metabolism; glycerophospholipid metabolism. Its function is as follows. Prenyltransferase that catalyzes the transfer of the geranylgeranyl moiety of geranylgeranyl diphosphate (GGPP) to the C2 hydroxyl of (S)-3-O-geranylgeranylglyceryl phosphate (GGGP). This reaction is the second ether-bond-formation step in the biosynthesis of archaeal membrane lipids. In Ignicoccus hospitalis (strain KIN4/I / DSM 18386 / JCM 14125), this protein is Digeranylgeranylglyceryl phosphate synthase.